The chain runs to 311 residues: N-acetylmuramic acid 6-phosphate etherase (311 aa).

One can recognise an SIS domain in the interval 66–229 (VAVRMARGGR…STITMIRLGK (164 aa)). E94 acts as the Proton donor in catalysis. Residue E125 is part of the active site.

Belongs to the GCKR-like family. MurNAc-6-P etherase subfamily. As to quaternary structure, homodimer.

The catalysed reaction is N-acetyl-D-muramate 6-phosphate + H2O = N-acetyl-D-glucosamine 6-phosphate + (R)-lactate. The protein operates within amino-sugar metabolism; N-acetylmuramate degradation. In terms of biological role, specifically catalyzes the cleavage of the D-lactyl ether substituent of MurNAc 6-phosphate, producing GlcNAc 6-phosphate and D-lactate. This chain is N-acetylmuramic acid 6-phosphate etherase, found in Streptomyces coelicolor (strain ATCC BAA-471 / A3(2) / M145).